The following is a 120-amino-acid chain: Large ribosomal subunit protein uL24 (120 aa).

Belongs to the universal ribosomal protein uL24 family. As to quaternary structure, part of the 50S ribosomal subunit.

In terms of biological role, one of two assembly initiator proteins, it binds directly to the 5'-end of the 23S rRNA, where it nucleates assembly of the 50S subunit. Its function is as follows. Located at the polypeptide exit tunnel on the outside of the subunit. The chain is Large ribosomal subunit protein uL24 from Archaeoglobus fulgidus (strain ATCC 49558 / DSM 4304 / JCM 9628 / NBRC 100126 / VC-16).